The primary structure comprises 426 residues: Serine--tRNA ligase (426 aa).

Residue 233-235 (TAE) participates in L-serine binding. 264 to 266 (RAE) lines the ATP pocket. Glu-287 is an L-serine binding site. Residue 351–354 (EISS) coordinates ATP. Ser-387 serves as a coordination point for L-serine.

It belongs to the class-II aminoacyl-tRNA synthetase family. Type-1 seryl-tRNA synthetase subfamily. Homodimer. The tRNA molecule binds across the dimer.

Its subcellular location is the cytoplasm. The enzyme catalyses tRNA(Ser) + L-serine + ATP = L-seryl-tRNA(Ser) + AMP + diphosphate + H(+). It carries out the reaction tRNA(Sec) + L-serine + ATP = L-seryl-tRNA(Sec) + AMP + diphosphate + H(+). Its pathway is aminoacyl-tRNA biosynthesis; selenocysteinyl-tRNA(Sec) biosynthesis; L-seryl-tRNA(Sec) from L-serine and tRNA(Sec): step 1/1. Functionally, catalyzes the attachment of serine to tRNA(Ser). Is also able to aminoacylate tRNA(Sec) with serine, to form the misacylated tRNA L-seryl-tRNA(Sec), which will be further converted into selenocysteinyl-tRNA(Sec). The protein is Serine--tRNA ligase of Clostridium kluyveri (strain NBRC 12016).